Here is a 101-residue protein sequence, read N- to C-terminus: Small ribosomal subunit protein uS14 (101 aa).

A compositionally biased stretch (basic and acidic residues) spans 1–11; sequence MAKKSAIETNE. The interval 1 to 24 is disordered; that stretch reads MAKKSAIETNERRRKLSQSKAAKR. Over residues 12-24 the composition is skewed to basic residues; sequence RRRKLSQSKAAKR.

Belongs to the universal ribosomal protein uS14 family. Part of the 30S ribosomal subunit. Contacts proteins S3 and S10.

In terms of biological role, binds 16S rRNA, required for the assembly of 30S particles and may also be responsible for determining the conformation of the 16S rRNA at the A site. This is Small ribosomal subunit protein uS14 from Azorhizobium caulinodans (strain ATCC 43989 / DSM 5975 / JCM 20966 / LMG 6465 / NBRC 14845 / NCIMB 13405 / ORS 571).